The chain runs to 1004 residues: NADH:acrylate oxidoreductase (1004 aa).

Threonine 455 is modified (FMN phosphoryl threonine). Positions 508, 527, 535, 536, 540, 541, and 775 each coordinate FAD. The active-site Proton donor is the arginine 834. Residues histidine 941, glutamate 970, alanine 985, and leucine 986 each contribute to the FAD site.

Belongs to the FAD-dependent oxidoreductase 2 family. FRD/SDH subfamily. FAD serves as cofactor. FMN is required as a cofactor. Is flavinylated on Thr-455 by ApbE, encoded in a neighboring gene. Flavinylation is essential for catalytic activity.

The enzyme catalyses acrylate + NADH + H(+) = propanoate + NAD(+). In terms of biological role, catalyzes the NADH-dependent reduction of acrylate to propanoate. The principal role of ARD in Vibrio seems to be the energy-saving detoxification of acrylate coming from the environment. May also use acrylate as the terminal electron acceptor for NADH regeneration at oxygen deficiency. NADPH cannot replace NADH as the electron donor. Is also able to reduce methacrylate in vitro, but with a much lower efficiency. This is NADH:acrylate oxidoreductase from Vibrio harveyi (Beneckea harveyi).